The primary structure comprises 329 residues: Ferredoxin--NAD(P)(+) reductase CarAd (329 aa).

Positions 2–92 (YQLKIEGQAP…DLRIKVAVQD (91 aa)) constitute a 2Fe-2S ferredoxin-type domain. Residues Cys35, Cys40, Cys43, and Cys76 each coordinate [2Fe-2S] cluster. The FAD-binding FR-type domain maps to 100 to 200 (ISRMEAEVVE…TGPMGTSFFR (101 aa)).

Monomer. Carbazole 1,9a-dioxygenase complex consists of a terminal oxygenase component CarAa, a ferredoxin reductase component CarAd and a ferredoxin component CarAc. Requires [2Fe-2S] cluster as cofactor. It depends on FAD as a cofactor.

The enzyme catalyses 2 reduced [2Fe-2S]-[ferredoxin] + NAD(+) + H(+) = 2 oxidized [2Fe-2S]-[ferredoxin] + NADH. The catalysed reaction is 2 reduced [2Fe-2S]-[ferredoxin] + NADP(+) + H(+) = 2 oxidized [2Fe-2S]-[ferredoxin] + NADPH. Part of the multicomponent carbazole 1,9a-dioxygenase (CARDO), that converts carbazole (CAR) into 2-aminobiphenyl-2,3-diol. It can use both NAD and NADP as electron donors, but NAD is supposed to be the physiological electron donor. The chain is Ferredoxin--NAD(P)(+) reductase CarAd (carAd) from Metapseudomonas resinovorans (Pseudomonas resinovorans).